A 428-amino-acid polypeptide reads, in one-letter code: Cholesterol 7-desaturase (428 aa).

A helical transmembrane segment spans residues isoleucine 6–leucine 26. The region spanning tryptophan 81–leucine 187 is the Rieske domain. [2Fe-2S] cluster is bound by residues cysteine 122, histidine 124, cysteine 143, and histidine 146.

Belongs to the cholesterol 7-desaturase family. [2Fe-2S] cluster serves as cofactor. Expressed in intestine at all postembryonic stages, including dauer. Expression is reduced in daf-2 mutants.

The protein localises to the membrane. It catalyses the reaction cholesterol + NADPH + O2 + H(+) = 7-dehydrocholesterol + NADP(+) + 2 H2O. The catalysed reaction is cholesterol + NADH + O2 + H(+) = 7-dehydrocholesterol + NAD(+) + 2 H2O. The protein operates within steroid hormone biosynthesis; dafachronic acid biosynthesis. Functionally, catalyzes the production of 7-dehydrocholesterol (7-DHC or cholesta-5,7-dien-3beta-ol) by inserting a double bond (desaturating) at the C7-C8 single bond of cholesterol. This reaction is the first step in the synthesis of the steroid hormone Delta(7)-dafachronic acid (one of the principal steroid hormones in nematodes). Dafachronic acids bind directly to the nuclear hormone receptor (NHR) daf-12, suppressing dauer formation and inducing reproductive growth. In Caenorhabditis elegans, this protein is Cholesterol 7-desaturase (daf-36).